We begin with the raw amino-acid sequence, 602 residues long: Protein SHORT-ROOT 1 (602 aa).

The segment covering 12 to 55 (AASEQQQQQQQSASYNSRSTTSSGSRSSSHQTNASYSYYHHSSN) has biased composition (low complexity). Disordered stretches follow at residues 12–69 (AASE…YYYG), 101–145 (DFSS…TAAG), and 165–185 (DFSSPASSSGGGTASSGAVGG). Over residues 56–68 (SGGGGGGGGGYYY) the composition is skewed to gly residues. The span at 122 to 145 (PPASSTPTGTAPTPPLSTSSTAAG) shows a compositional bias: low complexity. Residues 173 to 185 (SGGGTASSGAVGG) show a composition bias toward gly residues. The 419-residue stretch at 183 to 601 (VGGGGGGRWA…QPLVWASAWR (419 aa)) folds into the GRAS domain. The segment at 190–253 (RWASQLLLEC…LTASGPRTLR (64 aa)) is leucine repeat I (LRI). A VHIID region spans residues 272–349 (ALRFQELSPW…PHLSITTVVS (78 aa)). Residues 311–315 (FHILD) carry the VHIID motif. The tract at residues 365–401 (EIGQRMEKFARLMGVPFRFRAVHHSGDLAELDLDALD) is leucine repeat II (LRII). The interval 411–517 (LAVNCVNSLR…ERGAGRAIVD (107 aa)) is PFYRE. Residues 520–601 (SCPASESMER…QPLVWASAWR (82 aa)) are SAW.

This sequence belongs to the GRAS family. Interacts with SCR1. Interacts with SMOS1. In terms of tissue distribution, expressed in leaves and roots. Detected in the stele, the endodermis and part of the cortex.

Its subcellular location is the nucleus. Functionally, transcription factor required for the asymmetric cell division involved in radial pattern formation in roots. Essential for both cell division and cell specification. The protein is Protein SHORT-ROOT 1 of Oryza sativa subsp. japonica (Rice).